Consider the following 345-residue polypeptide: Type II restriction enzyme HgiCI (345 aa).

It carries out the reaction Endonucleolytic cleavage of DNA to give specific double-stranded fragments with terminal 5'-phosphates.. In terms of biological role, a P subtype restriction enzyme that recognizes the double-stranded sequence 5'-GGYRCC-3' and cleaves after G-1. This chain is Type II restriction enzyme HgiCI (hgiCIR), found in Herpetosiphon aurantiacus (Herpetosiphon giganteus).